A 391-amino-acid chain; its full sequence is Chaperone protein DnaJ (391 aa).

A J domain is found at 2–67 (DYYDVLGVSK…QKRESYDRYG (66 aa)). The CR-type zinc-finger motif lies at 148–226 (GVKKELLVSG…CRGQGRIKDK (79 aa)). Cys-161, Cys-164, Cys-178, Cys-181, Cys-200, Cys-203, Cys-214, and Cys-217 together coordinate Zn(2+). CXXCXGXG motif repeat units lie at residues 161 to 168 (CETCSGSG), 178 to 185 (CDRCKGSG), 200 to 207 (CPECGGEG), and 214 to 221 (CSSCRGQG).

The protein belongs to the DnaJ family. As to quaternary structure, homodimer. It depends on Zn(2+) as a cofactor.

It localises to the cytoplasm. Participates actively in the response to hyperosmotic and heat shock by preventing the aggregation of stress-denatured proteins and by disaggregating proteins, also in an autonomous, DnaK-independent fashion. Unfolded proteins bind initially to DnaJ; upon interaction with the DnaJ-bound protein, DnaK hydrolyzes its bound ATP, resulting in the formation of a stable complex. GrpE releases ADP from DnaK; ATP binding to DnaK triggers the release of the substrate protein, thus completing the reaction cycle. Several rounds of ATP-dependent interactions between DnaJ, DnaK and GrpE are required for fully efficient folding. Also involved, together with DnaK and GrpE, in the DNA replication of plasmids through activation of initiation proteins. The chain is Chaperone protein DnaJ from Chlamydia abortus (strain DSM 27085 / S26/3) (Chlamydophila abortus).